A 1114-amino-acid polypeptide reads, in one-letter code: OTU domain-containing protein 4 (1114 aa).

Position 1 is an N-acetylmethionine (M1). A disordered region spans residues 1 to 22 (MEAAVGVPDGGDQGGAGPREDA). Residues 8-17 (PDGGDQGGAG) show a composition bias toward gly residues. Positions 34-155 (LYRKLVAKDG…GNHYDIVYPI (122 aa)) constitute an OTU domain. Positions 39–45 (VAKDGSC) are cys-loop. D42 is an active-site residue. C45 (nucleophile) is an active-site residue. The tract at residues 94-104 (LENPQEWVGQV) is variable-loop. Y120 bears the Phosphotyrosine mark. 2 positions are modified to phosphoserine: S126 and S128. Phosphothreonine is present on T131. A his-loop region spans residues 143–148 (FSNGNH). H148 is an active-site residue. Residues S166, S199, S202, S204, and S341 each carry the phosphoserine modification. Residues 323–449 (KHTSKNLKAP…FGLSPEERRE (127 aa)) form a disordered region. Positions 392–404 (FSSHSSGSQSQKF) are enriched in low complexity. Residues 420 to 435 (RKPDRERVEDFDHTSR) are compositionally biased toward basic and acidic residues. Y439 bears the Phosphotyrosine mark. Position 443 is a phosphoserine (S443). At Y460 the chain carries Phosphotyrosine. The tract at residues 472-567 (ALSSSSVNQS…PAEQKPAEHV (96 aa)) is disordered. A compositionally biased stretch (low complexity) spans 474-487 (SSSSVNQSASQSSN). The segment covering 496-529 (HVGDRKGSRRRMDTEERKDKDSIHGHSQLDKRPE) has biased composition (basic and acidic residues). Phosphoserine occurs at positions 546, 893, and 900. The interval 911-1114 (EFPEARGEHV…MGDGHRGQHT (204 aa)) is disordered. 2 stretches are compositionally biased toward basic and acidic residues: residues 913-922 (PEARGEHVHS) and 969-1000 (NRER…DPKT). S1006, S1011, S1014, S1023, and S1024 each carry phosphoserine. The span at 1039–1048 (SKQFYNQTYG) shows a compositional bias: polar residues. S1049 carries the post-translational modification Phosphoserine. 2 stretches are compositionally biased toward basic and acidic residues: residues 1067-1086 (VRSE…EGYQ) and 1096-1114 (FRGD…GQHT).

Interacts with MYD88; the interaction is direct. Interacts with ALKBH3; the interaction is direct. Interacts with USP7; the interaction is direct. Interacts with USP9X; the interaction is direct. In terms of processing, phosphorylated on Ser-202 and Ser-204 likely by CSNK2A1-CSNK2A2 serine/threonine-protein kinase complex. Activates 'Lys-63'-specific deubiquitinase activity.

The protein resides in the cytoplasm. It localises to the nucleus. It carries out the reaction Thiol-dependent hydrolysis of ester, thioester, amide, peptide and isopeptide bonds formed by the C-terminal Gly of ubiquitin (a 76-residue protein attached to proteins as an intracellular targeting signal).. Its activity is regulated as follows. Phosphorylation on Ser-202 and Ser-204 induces 'Lys-63'-specific deubiquitinase activity. In terms of biological role, deubiquitinase which hydrolyzes the isopeptide bond between the ubiquitin C-terminus and the lysine epsilon-amino group of the target protein. May negatively regulate inflammatory and pathogen recognition signaling in innate immune response. Upon phosphorylation at Ser-202 and Ser-204 residues, via IL-1 receptor and Toll-like receptor signaling pathway, specifically deubiquitinates 'Lys-63'-polyubiquitinated MYD88 adapter protein triggering down-regulation of NF-kappa-B-dependent transcription of inflammatory mediators. Independently of the catalytic activity, acts as a scaffold for alternative deubiquitinases to assemble specific deubiquitinase-substrate complexes. Associates with USP7 and USP9X deubiquitinases to stabilize alkylation repair enzyme ALKBH3, thereby promoting the repair of alkylated DNA lesions. The sequence is that of OTU domain-containing protein 4 from Homo sapiens (Human).